Reading from the N-terminus, the 336-residue chain is Potassium channel subfamily K member 1 (336 aa).

At 1–20 the chain is on the cytoplasmic side; that stretch reads MLQSLAGSSCVRLVERHRSA. The helical transmembrane segment at 21–41 threads the bilayer; the sequence is WCFGFLVLGYLLYLVFGAVVF. Residues 42 to 103 lie on the Extracellular side of the membrane; the sequence is SSVELPYEDL…SNASGNWNWD (62 aa). N-linked (GlcNAc...) asparagine glycosylation occurs at asparagine 95. An intramembrane region (helical) is located at residues 104–116; it reads FTSALFFASTVLS. The stretch at 117–122 is an intramembrane region; sequence TTGYGH. The interval 117 to 122 is selectivity filter 1; the sequence is TTGYGH. At 123 to 132 the chain is on the extracellular side; the sequence is TVPLSDGGKA. The chain crosses the membrane as a helical span at residues 133–156; it reads FCIIYSVIGIPFTLLFLTAVVQRV. The Cytoplasmic segment spans residues 157–181; the sequence is TVHVTRRPVLYFHIRWGFSKQVVAI. A helical transmembrane segment spans residues 182–202; that stretch reads VHAVLLGFVTVSCFFFIPAAV. Topologically, residues 203–211 are extracellular; it reads FSVLEDDWN. The helical intramembrane region spans 212-224; it reads FLESFYFCFISLS. The tract at residues 225–230 is selectivity filter 2; sequence TIGLGD. An intramembrane segment occupies 225 to 231; sequence TIGLGDY. At 232–243 the chain is on the extracellular side; it reads VPGEGYNQKFRE. Residues 244-267 form a helical membrane-spanning segment; it reads LYKIGITCYLLLGLIAMLVVLETF. At 268–336 the chain is on the cytoplasmic side; it reads CELHELKKFR…PPYEDGSADH (69 aa). A Glycyl lysine isopeptide (Lys-Gly) (interchain with G-Cter in SUMO) cross-link involves residue lysine 274. Residues 293-299 are important for intracellular retention in recycling endosomes; the sequence is IMEHDQL. A disordered region spans residues 310 to 336; it reads GLKEEQKQSEPFVASQSPPYEDGSADH. Phosphoserine is present on serine 326.

It belongs to the two pore domain potassium channel (TC 1.A.1.8) family. As to quaternary structure, homodimer; disulfide-linked. Heterodimer with KCNK2; disulfide-linked. In astrocytes, forms mostly heterodimeric potassium channels with KCNK2, with only a minor proportion of functional channels containing homodimeric KCNK1. Interacts with KCNK3 and KCNK9, forming functional heterodimeric channels. Interacts with GNG4. Identified in a complex with PSD and ARF6; interacts only with PSD that is bound to ARF6. Interacts with UBE2I. Sumoylation is controversial. Sumoylated by UBE2I. Not sumoylated when expressed in xenopus oocytes or mammalian cells. Sumoylation inactivates the channel, but does not interfere with expression at the cell membrane. Sumoylation of a single subunit is sufficient to silence the dimeric channel. Sumoylation of KCNK1 is sufficient to silence heterodimeric channels formed by KCNK1 and KCNK3 or KCNK9. Desumoylated by SENP1; this activates the channel. Desumoylated by SENP1; this strongly increases halothane-mediated activation of heterodimeric channels formed with KCNK9. SENP1 treatment has no effect. In terms of tissue distribution, detected in spiral ganglion neurons. Detected in hippocampus CA1 and CA1 regions and in the molecular layer of the dentate gyrus. Detected on hippocampus astrocytes. Highly expressed in the stria vascularis in the cochlea. Detected in pancreas islet beta cells. Detected in kidney, at brush border membranes in proximal tubules and in cytoplasmic structures in distal convoluted tubules, thick ascending limbs and collecting ducts (at protein level). Widely expressed. Detected in spiral ganglion cells. Highest expression in brain, kidney, thyroid, salivary gland, adrenal gland, prostate, epididymis, uterus, placenta, colon and jejunum. Moderate expression in eyes, pituitary, pancreas, smooth muscle, testis and ovary. Very low levels in lung, aorta, liver, heart, skeletal muscle, thymus and spleen. In the brain, highest expression in cerebellar granule cells, brainstem, hippocampus and cerebral cortex.

It is found in the cell membrane. It localises to the recycling endosome. Its subcellular location is the apical cell membrane. The protein localises to the cytoplasmic vesicle. The protein resides in the perikaryon. It is found in the cell projection. It localises to the dendrite. Its subcellular location is the synaptic cell membrane. It catalyses the reaction K(+)(in) = K(+)(out). The catalysed reaction is NH4(+)(in) = NH4(+)(out). It carries out the reaction Na(+)(in) = Na(+)(out). The enzyme catalyses Rb(+)(in) = Rb(+)(out). It catalyses the reaction Cs(+)(in) = Cs(+)(out). The catalysed reaction is Li(+)(in) = Li(+)(out). It carries out the reaction L-glutamate(out) = L-glutamate(in). The enzyme catalyses chloride(in) = chloride(out). Inhibited by quinine, quinidine, barium, and internal acidification. Its function is as follows. Ion channel that contributes to passive transmembrane potassium transport and to the regulation of the resting membrane potential in brain astrocytes, but also in kidney and in other tissues. Forms dimeric channels through which potassium ions pass in accordance with their electrochemical gradient. The channel is selective for K(+) ions at physiological potassium concentrations and at neutral pH, but becomes permeable to Na(+) at subphysiological K(+) levels and upon acidification of the extracellular medium. The homodimer has very low potassium channel activity, when expressed in heterologous systems, and can function as weakly inward rectifying potassium channel. Channel activity is modulated by activation of serotonin receptors. Heterodimeric channels containing KCNK1 and KCNK2 have much higher activity, and may represent the predominant form in astrocytes. Heterodimeric channels containing KCNK1 and KCNK3 or KCNK9 have much higher activity. Heterodimeric channels formed by KCNK1 and KCNK9 may contribute to halothane-sensitive currents. Mediates outward rectifying potassium currents in dentate gyrus granule cells and contributes to the regulation of their resting membrane potential. Contributes to the regulation of action potential firing in dentate gyrus granule cells and down-regulates their intrinsic excitability. In astrocytes, the heterodimer formed by KCNK1 and KCNK2 is required for rapid glutamate release in response to activation of G-protein coupled receptors, such as F2R and CNR1. Required for normal ion and water transport in the kidney. Contributes to the regulation of the resting membrane potential of pancreatic beta cells. The low channel activity of homodimeric KCNK1 may be due to sumoylation. The low channel activity may be due to rapid internalization from the cell membrane and retention in recycling endosomes. Permeable to monovalent cations with ion selectivity for K(+) &gt; Rb(+) &gt;&gt; NH4(+) &gt;&gt; Cs(+) = Na(+) = Li(+). This is Potassium channel subfamily K member 1 (Kcnk1) from Mus musculus (Mouse).